The primary structure comprises 246 residues: Proteasome subunit alpha type-6 (246 aa).

Belongs to the peptidase T1A family. In terms of assembly, the 26S proteasome consists of a 20S proteasome core and two 19S regulatory subunits. The 20S proteasome core is composed of 28 subunits that are arranged in four stacked rings, resulting in a barrel-shaped structure. The two end rings are each formed by seven alpha subunits, and the two central rings are each formed by seven beta subunits. The catalytic chamber with the active sites is on the inside of the barrel.

It is found in the cytoplasm. Its subcellular location is the nucleus. Its function is as follows. The proteasome is a multicatalytic proteinase complex which is characterized by its ability to cleave peptides with Arg, Phe, Tyr, Leu, and Glu adjacent to the leaving group at neutral or slightly basic pH. The proteasome has an ATP-dependent proteolytic activity. This Caenorhabditis elegans protein is Proteasome subunit alpha type-6 (pas-1).